Here is a 363-residue protein sequence, read N- to C-terminus: Tetraacyldisaccharide 4'-kinase (363 aa).

62–69 (RVGGTGKT) contacts ATP.

This sequence belongs to the LpxK family.

It carries out the reaction a lipid A disaccharide + ATP = a lipid IVA + ADP + H(+). It participates in glycolipid biosynthesis; lipid IV(A) biosynthesis; lipid IV(A) from (3R)-3-hydroxytetradecanoyl-[acyl-carrier-protein] and UDP-N-acetyl-alpha-D-glucosamine: step 6/6. Its function is as follows. Transfers the gamma-phosphate of ATP to the 4'-position of a tetraacyldisaccharide 1-phosphate intermediate (termed DS-1-P) to form tetraacyldisaccharide 1,4'-bis-phosphate (lipid IVA). This chain is Tetraacyldisaccharide 4'-kinase, found in Polynucleobacter asymbioticus (strain DSM 18221 / CIP 109841 / QLW-P1DMWA-1) (Polynucleobacter necessarius subsp. asymbioticus).